Reading from the N-terminus, the 99-residue chain is Large ribosomal subunit protein uL23cz/uL23cy (99 aa).

Residues 1 to 37 form a disordered region; that stretch reads MGGVENPVSTDKAIRLPERKQYSSNAEPNPSKTEVKR. Positions 12 to 21 are enriched in basic and acidic residues; the sequence is KAIRLPERKQ. Polar residues predominate over residues 22 to 32; the sequence is YSSNAEPNPSK.

The protein belongs to the universal ribosomal protein uL23 family. Part of the 50S ribosomal subunit.

It localises to the plastid. The protein resides in the chloroplast. Functionally, binds to 23S rRNA. In Selaginella uncinata (Blue spike-moss), this protein is Large ribosomal subunit protein uL23cz/uL23cy (rpl23-A).